A 229-amino-acid chain; its full sequence is Lipoprotein-releasing system ATP-binding protein LolD (229 aa).

Residues 7-229 (LQCINLTKSF…KNGQLFNNKN (223 aa)) enclose the ABC transporter domain. Residue 43–50 (GKSGSGKS) participates in ATP binding.

It belongs to the ABC transporter superfamily. Lipoprotein translocase (TC 3.A.1.125) family. In terms of assembly, the complex is composed of two ATP-binding proteins (LolD) and two transmembrane proteins (LolC and LolE).

The protein localises to the cell inner membrane. Its function is as follows. Part of the ABC transporter complex LolCDE involved in the translocation of mature outer membrane-directed lipoproteins, from the inner membrane to the periplasmic chaperone, LolA. Responsible for the formation of the LolA-lipoprotein complex in an ATP-dependent manner. The polypeptide is Lipoprotein-releasing system ATP-binding protein LolD (Buchnera aphidicola subsp. Schizaphis graminum (strain Sg)).